We begin with the raw amino-acid sequence, 513 residues long: ATP synthase subunit alpha 1 (513 aa).

169 to 176 (GDRQTGKT) contacts ATP.

It belongs to the ATPase alpha/beta chains family. F-type ATPases have 2 components, CF(1) - the catalytic core - and CF(0) - the membrane proton channel. CF(1) has five subunits: alpha(3), beta(3), gamma(1), delta(1), epsilon(1). CF(0) has three main subunits: a(1), b(2) and c(9-12). The alpha and beta chains form an alternating ring which encloses part of the gamma chain. CF(1) is attached to CF(0) by a central stalk formed by the gamma and epsilon chains, while a peripheral stalk is formed by the delta and b chains.

It localises to the cell inner membrane. The enzyme catalyses ATP + H2O + 4 H(+)(in) = ADP + phosphate + 5 H(+)(out). Its function is as follows. Produces ATP from ADP in the presence of a proton gradient across the membrane. The alpha chain is a regulatory subunit. In Methylococcus capsulatus (strain ATCC 33009 / NCIMB 11132 / Bath), this protein is ATP synthase subunit alpha 1.